The chain runs to 613 residues: MSPSAPEQKPQLQQQQQQQQQGSSSGDSSSGSVNDSKSVTPAPSATSSTSQSSTAPSTSSDDNLICRWNACNQKFPAPEALYEHICERHVGRKSTNNLNLTCQWNSCRTTTVKRDHITSHIRVHVPLKPHKCEFCGKSFKRPQDLKKHVKTHADDSVLVRPSQDPQGGLNYRPQPPKGPSSYYDHTGQMRTNAAAFAHQAGHPSGGYYAPQPSTNYGLYFNQPPINNARTEHLGYSAAAGGYDRKRTYDMVDDFFGSAKRRQIDPSSYAQIGRSLMPLHGNLSVPNGPMTATEQYMPQPAPAPVHAGPTPSQNPLAQQYYLPMPSARTQKDLIHIDTILGQMQDTIYENANHATAGVHIHHAENGFNGYRNTPSPPTSHRSPTGMHVGADGYQPVSAASMASPMTAISSTGTPAVTPPSSSMSYTSGHSPSPSSSAMSPQSRHGSTASVMYPTLPTSLPAVSQGFGHSATTTLGPSFDGSERRRYSGGMLQRARAGPLPLPHEDTSGASTPKASESALSVGSPSSESDVSDATREREEQYDRWLENMRVIETLREYVRGRLERKEFVEDNESPQSSHSDAMDVDPKSPQAPPRELGTPREGSSLYPILRMPGA.

The tract at residues Met-1–Asp-61 is disordered. Low complexity predominate over residues Gln-11–Ser-60. 3 C2H2-type zinc fingers span residues Leu-64–His-89, Leu-100–His-124, and His-130–His-152. Basic and acidic residues predominate over residues Lys-146 to Val-157. 4 disordered regions span residues Lys-146–Thr-186, Asn-371–Gly-391, Ala-406–Glu-535, and Glu-565–Ala-613. The span at Pro-417 to Ser-441 shows a compositional bias: low complexity. 2 stretches are compositionally biased toward polar residues: residues Arg-442 to Ala-460 and Ser-506 to Ala-517. Residues Tyr-451–Leu-454 carry the YPX[LI] motif 1 motif. The YPX[LI] motif 2 motif lies at Tyr-605–Leu-608.

This sequence belongs to the pacC/RIM101 family. In terms of assembly, binds to DNA. In terms of processing, activated by C-terminal proteolytic cleavage by signaling protease (probably palB/RIM13) at neutral to alkaline ambient pH.

Its subcellular location is the cytoplasm. It localises to the nucleus. Functionally, transcription factor that mediates regulation of both acid- and alkaline-expressed genes in response to ambient pH. At alkaline ambient pH, activates transcription of alkaline-expressed genes (including PAC1 itself) and represses transcription of acid-expressed genes. The protein is pH-response transcription factor pacC/RIM101 (PAC1) of Gibberella moniliformis (Maize ear and stalk rot fungus).